The chain runs to 104 residues: PTS system lactose-specific EIIA component (104 aa).

Residues 1 to 102 (MNRDEVQLLG…MKHLIELYKK (102 aa)) form the PTS EIIA type-3 domain. The active-site Tele-phosphohistidine intermediate is His-78. His-78 carries the post-translational modification Phosphohistidine; by HPr. Mg(2+) is bound at residue Asp-81.

Homotrimer. The cofactor is Mg(2+).

The protein localises to the cytoplasm. In terms of biological role, the phosphoenolpyruvate-dependent sugar phosphotransferase system (sugar PTS), a major carbohydrate active transport system, catalyzes the phosphorylation of incoming sugar substrates concomitantly with their translocation across the cell membrane. The enzyme II LacEF PTS system is involved in lactose transport. The protein is PTS system lactose-specific EIIA component of Staphylococcus epidermidis (strain ATCC 35984 / DSM 28319 / BCRC 17069 / CCUG 31568 / BM 3577 / RP62A).